Here is a 150-residue protein sequence, read N- to C-terminus: Urease accessory protein UreE (150 aa).

This sequence belongs to the UreE family.

It localises to the cytoplasm. In terms of biological role, involved in urease metallocenter assembly. Binds nickel. Probably functions as a nickel donor during metallocenter assembly. This Staphylococcus carnosus (strain TM300) protein is Urease accessory protein UreE.